The following is a 534-amino-acid chain: Probable bifunctional tRNA threonylcarbamoyladenosine biosynthesis protein (534 aa).

The kae1 stretch occupies residues 1–324 (MICLGIEGTA…YRTDQVEVTW (324 aa)). 3 residues coordinate Fe cation: His108, His112, and Tyr129. L-threonylcarbamoyladenylate contacts are provided by residues 129 to 133 (YTSGG), Asp161, Gly174, Glu178, and Asn258. A Fe cation-binding site is contributed by Asp286. Positions 335–534 (LPDNIKEKGA…DEIEKRGRYL (200 aa)) constitute a Protein kinase domain. ATP-binding positions include 340 to 348 (KEKGAEADI) and Lys361. The active-site Proton acceptor; for kinase activity is the Asp455.

In the N-terminal section; belongs to the KAE1 / TsaD family. The protein in the C-terminal section; belongs to the protein kinase superfamily. Tyr protein kinase family. BUD32 subfamily. As to quaternary structure, component of the KEOPS complex that consists of Kae1, Bud32, Cgi121 and Pcc1; the whole complex dimerizes. Fe(2+) serves as cofactor.

The protein localises to the cytoplasm. The catalysed reaction is L-seryl-[protein] + ATP = O-phospho-L-seryl-[protein] + ADP + H(+). The enzyme catalyses L-threonyl-[protein] + ATP = O-phospho-L-threonyl-[protein] + ADP + H(+). It catalyses the reaction L-threonylcarbamoyladenylate + adenosine(37) in tRNA = N(6)-L-threonylcarbamoyladenosine(37) in tRNA + AMP + H(+). Functionally, required for the formation of a threonylcarbamoyl group on adenosine at position 37 (t(6)A37) in tRNAs that read codons beginning with adenine. Is a component of the KEOPS complex that is probably involved in the transfer of the threonylcarbamoyl moiety of threonylcarbamoyl-AMP (TC-AMP) to the N6 group of A37. The Kae1 domain likely plays a direct catalytic role in this reaction. The Bud32 domain probably displays kinase activity that regulates Kae1 function. This is Probable bifunctional tRNA threonylcarbamoyladenosine biosynthesis protein from Methanosphaera stadtmanae (strain ATCC 43021 / DSM 3091 / JCM 11832 / MCB-3).